The sequence spans 112 residues: Large ribosomal subunit protein eL33y (112 aa).

The protein belongs to the eukaryotic ribosomal protein eL33 family.

The polypeptide is Large ribosomal subunit protein eL33y (RPL35AC) (Arabidopsis thaliana (Mouse-ear cress)).